The primary structure comprises 301 residues: Phosducin-like protein (301 aa).

Thr-2 is modified (N-acetylthreonine). The interval 15–60 (YYYSTSEDEDSDHEDKDRGRGAPASSSTPAEAELAGEGISVNTGPK) is disordered. Ser-20 and Ser-25 each carry phosphoserine. Low complexity predominate over residues 36 to 49 (APASSSTPAEAELA). The region spanning 36-299 (APASSSTPAE…TCHSEDSDLE (264 aa)) is the Phosducin domain. The tract at residues 158–301 (FKQVLEIPSG…HSEDSDLEID (144 aa)) is thioredoxin fold. A phosphoserine mark is found at Ser-226, Ser-293, and Ser-296.

The protein belongs to the phosducin family. As to quaternary structure, interacts with the CCT chaperonin complex. Forms a complex with the beta and gamma subunits of the GTP-binding protein, transducin.

It localises to the cell projection. Its subcellular location is the cilium. In terms of biological role, functions as a co-chaperone for CCT in the assembly of heterotrimeric G protein complexes, facilitates the assembly of both Gbeta-Ggamma and RGS-Gbeta5 heterodimers. Also acts as a positive regulator of hedgehog signaling and regulates ciliary function. This chain is Phosducin-like protein (Pdcl), found in Rattus norvegicus (Rat).